The chain runs to 552 residues: MEKVKQTIRAPRGTELQTKGWVQEAALRMLMNNLDPEVAEKPEELVVYGGIGRAARNWESYNAIVDSLKTLESDETLLVQSGKPVAIFKSHEDAPRVLLANSNLVPKWANWDHFRELEKKGLMMYGQMTAGSWIYIGTQGILQGTYETFGEAARQHFGGSLKGTLTLTAGLGGMGGAQPLAVTMNGGVVIAIDVDKRSIDRRIEKRYCDMYTESLEEALTVANEYKEKKEPISIGLLGNAAEILPELVKRNITPDLVTDQTSAHDPLNGYIPVGYTLEEAAKLREEDPERYVQLSKESMTKHVEAMLTMQAKGAITFDYGNNIRQVAFDEGLKNAFDFPGFVPAFIRPLFCEGKGPFRWVALSGDPEDIYKTDEVILREFADNEHLCNWIRMARQQVEFQGLPSRICWLGYGERAKFGRIINEMVANGELSAPIVIGRDHLDCGSVASPNRETEAMKDGSDAVADWPILNALINSVNGASWVSVHHGGGVGMGYSLHAGMVIVADGTEAAAKRIERVLTSDPGMGVVRHVDAGYDLAVETAKEKGVNIPMMK.

NAD(+) contacts are provided by residues 49–50 (GG), glutamine 127, 173–175 (GMG), aspartate 193, 239–240 (NA), 260–264 (QTSAH), 270–271 (YI), and tyrosine 319. Cysteine 407 is a catalytic residue. Glycine 489 lines the NAD(+) pocket.

It belongs to the urocanase family. NAD(+) serves as cofactor.

It localises to the cytoplasm. The enzyme catalyses 4-imidazolone-5-propanoate = trans-urocanate + H2O. It participates in amino-acid degradation; L-histidine degradation into L-glutamate; N-formimidoyl-L-glutamate from L-histidine: step 2/3. Its function is as follows. Catalyzes the conversion of urocanate to 4-imidazolone-5-propionate. In Bacillus cereus (strain AH187), this protein is Urocanate hydratase.